The sequence spans 224 residues: Transposase for insertion sequence element IS257 in transposon Tn4003 (224 aa).

Positions 33–52 form a DNA-binding region, H-T-H motif; that stretch reads EILRGRGVNVHHSTVYRWVQ. An Integrase catalytic domain is found at 73–222; the sequence is WRIDETYIKI…SPCHEISIML (150 aa).

In terms of biological role, involved in the transposition of the insertion sequence. This chain is Transposase for insertion sequence element IS257 in transposon Tn4003, found in Staphylococcus aureus.